Reading from the N-terminus, the 220-residue chain is N-(5'-phosphoribosyl)anthranilate isomerase (220 aa).

Belongs to the TrpF family.

The enzyme catalyses N-(5-phospho-beta-D-ribosyl)anthranilate = 1-(2-carboxyphenylamino)-1-deoxy-D-ribulose 5-phosphate. It functions in the pathway amino-acid biosynthesis; L-tryptophan biosynthesis; L-tryptophan from chorismate: step 3/5. This is N-(5'-phosphoribosyl)anthranilate isomerase from Leptothrix cholodnii (strain ATCC 51168 / LMG 8142 / SP-6) (Leptothrix discophora (strain SP-6)).